The chain runs to 636 residues: Basic helix-loop-helix ARNT-like protein 2 (636 aa).

The segment at 25-62 (VSSRVSPGTRPTAMGSFSSHMTEFPRKRKGSDSDPSQS) is disordered. Positions 46–258 (TEFPRKRKGS…SPREKLIDAK (213 aa)) are interaction with PER2. Residues 49 to 54 (PRKRKG) carry the Nuclear localization signal motif. The region spanning 107–160 (AFREAHSQTEKRRRDKMNNLIEELSAMIPQCNPMARKLDKLTVLRMAVQHLRSL) is the bHLH domain. The Nuclear export signal 1 motif lies at 177–187 (LQDNELRHLIL). Residues 178-250 (QDNELRHLIL…EQLSSFDISP (73 aa)) form the PAS 1 domain. K287 is covalently cross-linked (Glycyl lysine isopeptide (Lys-Gly) (interchain with G-Cter in SUMO2 and SUMO3)). Residue K294 forms a Glycyl lysine isopeptide (Lys-Gly) (interchain with G-Cter in SUMO2) linkage. The region spanning 357–427 (VPQNSGEINV…DKHKAVLQSK (71 aa)) is the PAS 2 domain. A Nuclear export signal 2 motif is present at residues 392 to 400 (LGYLPQELL). The region spanning 432 to 475 (TDSYKFRAKDGSFVTLKSQWFSFTNPWTKELEYIVSVNTLVLGH) is the PAC domain.

In terms of assembly, component of the circadian core oscillator, which includes the CRY proteins, CLOCK, or NPAS2, BMAL1 or BMAL2, CSNK1D and/or CSNK1E, TIMELESS and the PER proteins. Interacts directly with CLOCK to form the BMAL2-CLOCK transactivator. Can form heterodimers or homodimers which interact directly with CLOCK to form the transcription activator. Interacts with NPAS2 and HIF1A. Interacts with PER2. As to expression, expressed in fetal brain. Highly expressed in brain and placenta. Lower levels in heart, liver, thymus, kidney and lung. Located to endothelial cells and neuronal cells of the suprachiasmatic nucleus (SCN). Also detected in endothelial cells of the heart, lung and kidney. In the brain, specifically expressed in the thalamus, hippocampus and amygdala.

Its subcellular location is the nucleus. Transcriptional activator which forms a core component of the circadian clock. The circadian clock, an internal time-keeping system, regulates various physiological processes through the generation of approximately 24 hour circadian rhythms in gene expression, which are translated into rhythms in metabolism and behavior. It is derived from the Latin roots 'circa' (about) and 'diem' (day) and acts as an important regulator of a wide array of physiological functions including metabolism, sleep, body temperature, blood pressure, endocrine, immune, cardiovascular, and renal function. Consists of two major components: the central clock, residing in the suprachiasmatic nucleus (SCN) of the brain, and the peripheral clocks that are present in nearly every tissue and organ system. Both the central and peripheral clocks can be reset by environmental cues, also known as Zeitgebers (German for 'timegivers'). The predominant Zeitgeber for the central clock is light, which is sensed by retina and signals directly to the SCN. The central clock entrains the peripheral clocks through neuronal and hormonal signals, body temperature and feeding-related cues, aligning all clocks with the external light/dark cycle. Circadian rhythms allow an organism to achieve temporal homeostasis with its environment at the molecular level by regulating gene expression to create a peak of protein expression once every 24 hours to control when a particular physiological process is most active with respect to the solar day. Transcription and translation of core clock components (CLOCK, NPAS2, BMAL1, BMAL2, PER1, PER2, PER3, CRY1 and CRY2) plays a critical role in rhythm generation, whereas delays imposed by post-translational modifications (PTMs) are important for determining the period (tau) of the rhythms (tau refers to the period of a rhythm and is the length, in time, of one complete cycle). A diurnal rhythm is synchronized with the day/night cycle, while the ultradian and infradian rhythms have a period shorter and longer than 24 hours, respectively. Disruptions in the circadian rhythms contribute to the pathology of cardiovascular diseases, cancer, metabolic syndromes and aging. A transcription/translation feedback loop (TTFL) forms the core of the molecular circadian clock mechanism. Transcription factors, CLOCK or NPAS2 and BMAL1 or BMAL2, form the positive limb of the feedback loop, act in the form of a heterodimer and activate the transcription of core clock genes and clock-controlled genes (involved in key metabolic processes), harboring E-box elements (5'-CACGTG-3') within their promoters. The core clock genes: PER1/2/3 and CRY1/2 which are transcriptional repressors form the negative limb of the feedback loop and interact with the CLOCK|NPAS2-BMAL1|BMAL2 heterodimer inhibiting its activity and thereby negatively regulating their own expression. This heterodimer also activates nuclear receptors NR1D1/2 and RORA/B/G, which form a second feedback loop and which activate and repress BMAL1 transcription, respectively. The CLOCK-BMAL2 heterodimer activates the transcription of SERPINE1/PAI1 and BHLHE40/DEC1. The sequence is that of Basic helix-loop-helix ARNT-like protein 2 from Homo sapiens (Human).